Here is a 109-residue protein sequence, read N- to C-terminus: Nucleoid-associated protein PM0205 (109 aa).

Belongs to the YbaB/EbfC family. As to quaternary structure, homodimer.

It is found in the cytoplasm. It localises to the nucleoid. In terms of biological role, binds to DNA and alters its conformation. May be involved in regulation of gene expression, nucleoid organization and DNA protection. The chain is Nucleoid-associated protein PM0205 from Pasteurella multocida (strain Pm70).